Here is a 219-residue protein sequence, read N- to C-terminus: Ribose-5-phosphate isomerase A (219 aa).

Substrate contacts are provided by residues serine 28–threonine 31, aspartate 81–aspartate 84, and lysine 94–glycine 97. Glutamate 103 (proton acceptor) is an active-site residue. Lysine 121 serves as a coordination point for substrate.

This sequence belongs to the ribose 5-phosphate isomerase family. Homodimer.

The catalysed reaction is aldehydo-D-ribose 5-phosphate = D-ribulose 5-phosphate. It participates in carbohydrate degradation; pentose phosphate pathway; D-ribose 5-phosphate from D-ribulose 5-phosphate (non-oxidative stage): step 1/1. Catalyzes the reversible conversion of ribose-5-phosphate to ribulose 5-phosphate. This Histophilus somni (strain 129Pt) (Haemophilus somnus) protein is Ribose-5-phosphate isomerase A.